The following is an 804-amino-acid chain: Enhancer of polycomb homolog 2 (804 aa).

Disordered stretches follow at residues Q372–P395, G484–C508, Q603–M624, and P646–S669. Polar residues-rich tracts occupy residues S611–M624 and D654–S669.

It belongs to the enhancer of polycomb family.

It localises to the nucleus. Functionally, may play a role in transcription or DNA repair. The protein is Enhancer of polycomb homolog 2 (epc2) of Xenopus laevis (African clawed frog).